The primary structure comprises 193 residues: Peptidyl-tRNA hydrolase (193 aa).

A tRNA-binding site is contributed by Tyr16. His21 acts as the Proton acceptor in catalysis. TRNA-binding residues include Phe67, Asn69, and Asn115.

This sequence belongs to the PTH family. In terms of assembly, monomer.

It is found in the cytoplasm. The catalysed reaction is an N-acyl-L-alpha-aminoacyl-tRNA + H2O = an N-acyl-L-amino acid + a tRNA + H(+). Hydrolyzes ribosome-free peptidyl-tRNAs (with 1 or more amino acids incorporated), which drop off the ribosome during protein synthesis, or as a result of ribosome stalling. Its function is as follows. Catalyzes the release of premature peptidyl moieties from peptidyl-tRNA molecules trapped in stalled 50S ribosomal subunits, and thus maintains levels of free tRNAs and 50S ribosomes. In Psychrobacter cryohalolentis (strain ATCC BAA-1226 / DSM 17306 / VKM B-2378 / K5), this protein is Peptidyl-tRNA hydrolase.